Consider the following 141-residue polypeptide: Elongation factor G, chloroplastic (141 aa).

The region spanning 12 to 141 (KDYRNIGIMA…VPRICFVNKM (130 aa)) is the tr-type G domain. GTP contacts are provided by residues 21–28 (AHIDAGKT) and 85–89 (DTPGH).

This sequence belongs to the TRAFAC class translation factor GTPase superfamily. Classic translation factor GTPase family. EF-G/EF-2 subfamily.

It is found in the plastid. The protein localises to the chloroplast. It functions in the pathway protein biosynthesis; polypeptide chain elongation. In terms of biological role, chloroplast-localized elongation factor EF-G involved in protein synthesis in plastids. Catalyzes the GTP-dependent ribosomal translocation step during translation elongation. During this step, the ribosome changes from the pre-translocational (PRE) to the post-translocational (POST) state as the newly formed A-site-bound peptidyl-tRNA and P-site-bound deacylated tRNA move to the P and E sites, respectively. Catalyzes the coordinated movement of the two tRNA molecules, the mRNA and conformational changes in the ribosome. The polypeptide is Elongation factor G, chloroplastic (fusA) (Pisum sativum (Garden pea)).